Here is a 271-residue protein sequence, read N- to C-terminus: Shikimate dehydrogenase (NADP(+)) (271 aa).

Residues 14-16 (SLS) and Thr-61 contribute to the shikimate site. The Proton acceptor role is filled by Lys-65. Residues Asn-86 and Asp-101 each contribute to the shikimate site. Residues 125–129 (GAGGA) and Ile-212 contribute to the NADP(+) site. Tyr-214 contacts shikimate. NADP(+) is bound at residue Gly-235.

The protein belongs to the shikimate dehydrogenase family. As to quaternary structure, homodimer.

The enzyme catalyses shikimate + NADP(+) = 3-dehydroshikimate + NADPH + H(+). The protein operates within metabolic intermediate biosynthesis; chorismate biosynthesis; chorismate from D-erythrose 4-phosphate and phosphoenolpyruvate: step 4/7. Its function is as follows. Involved in the biosynthesis of the chorismate, which leads to the biosynthesis of aromatic amino acids. Catalyzes the reversible NADPH linked reduction of 3-dehydroshikimate (DHSA) to yield shikimate (SA). This Clostridium perfringens (strain SM101 / Type A) protein is Shikimate dehydrogenase (NADP(+)).